Consider the following 511-residue polypeptide: 2'-acyl-2-O-sulfo-trehalose (hydroxy)phthioceranyltransferase PapA1 (511 aa).

This sequence belongs to the PapA acyltransferase family.

It carries out the reaction a (hydroxy)phthioceranyl-[(hydroxy)phthioceranic acid synthase] + 2'-palmitoyl/stearoyl-2-O-sulfo-alpha,alpha-trehalose = a 3'-(hydroxy)phthioceranyl-2'-palmitoyl/stearoyl-2-O-sulfo-alpha,alpha-trehalose + holo-[(hydroxy)phthioceranic acid synthase].. Its function is as follows. Catalyzes the acylation of trehalose-2-sulfate-2'-palmitate (SL659) by adding the (hydroxy)phthioceranoyl group at the 3'-position to yield the diacylated intermediate 2-palmitoyl-3-(C43)-phthioceranyl-alpha, alpha'-D-trehalose-2'-sulfate (SL1278). This Mycobacterium bovis (strain BCG / Pasteur 1173P2) protein is 2'-acyl-2-O-sulfo-trehalose (hydroxy)phthioceranyltransferase PapA1 (papA1).